Consider the following 278-residue polypeptide: Large ribosomal subunit protein uL2 (278 aa).

The tract at residues 214–278 is disordered; the sequence is WLGKRPHNRG…IMRSRHQRKS (65 aa).

The protein belongs to the universal ribosomal protein uL2 family. As to quaternary structure, part of the 50S ribosomal subunit. Forms a bridge to the 30S subunit in the 70S ribosome.

Its function is as follows. One of the primary rRNA binding proteins. Required for association of the 30S and 50S subunits to form the 70S ribosome, for tRNA binding and peptide bond formation. It has been suggested to have peptidyltransferase activity; this is somewhat controversial. Makes several contacts with the 16S rRNA in the 70S ribosome. The polypeptide is Large ribosomal subunit protein uL2 (Chelativorans sp. (strain BNC1)).